A 63-amino-acid polypeptide reads, in one-letter code: Insect toxin TbIT-1 (63 aa).

Positions Lys2–Asx63 constitute an LCN-type CS-alpha/beta domain. 4 disulfides stabilise this stretch: Cys12–Cys62, Cys16–Cys38, Cys24–Cys43, and Cys28–Cys45.

Belongs to the long (4 C-C) scorpion toxin superfamily. Sodium channel inhibitor family. Beta subfamily. Expressed by the venom gland.

The protein resides in the secreted. In terms of biological role, beta toxins bind voltage-independently at site-4 of sodium channels (Nav) and shift the voltage of activation toward more negative potentials thereby affecting sodium channel activation and promoting spontaneous and repetitive firing. This toxin is only active against insects. In Tityus bahiensis (Brazilian scorpion), this protein is Insect toxin TbIT-1.